A 116-amino-acid chain; its full sequence is MSDKKISRLRRAKKTRYKIRELGVDRLSINRTPRHIYAQIISADGSKVLATASTLDKDLRAGATGNVEAAGKVGAMIAERAKAAGITKVAFDRSGFKYHGRVKALADAARENGLEF.

It belongs to the universal ribosomal protein uL18 family. Part of the 50S ribosomal subunit; part of the 5S rRNA/L5/L18/L25 subcomplex. Contacts the 5S and 23S rRNAs.

Functionally, this is one of the proteins that bind and probably mediate the attachment of the 5S RNA into the large ribosomal subunit, where it forms part of the central protuberance. This Hahella chejuensis (strain KCTC 2396) protein is Large ribosomal subunit protein uL18.